The sequence spans 351 residues: Protein IQ-DOMAIN 27 (351 aa).

The interval 15-37 is disordered; sequence KKSKDRSHVSGGDSVKGGDHSGD. The tract at residues 98–114 is calmodulin-binding; it reads EERWAAVKIQKVFRGSL. IQ domains follow at residues 99 to 127 and 128 to 150; these read ERWA…GIVK and LQAL…SIQT. A Nuclear localization signal motif is present at residues 191–198; that stretch reads DRRTKIVE. Residues 299–310 are compositionally biased toward basic residues; it reads SFKAKVRSHSAP. Residues 299 to 351 form a disordered region; sequence SFKAKVRSHSAPRQRSERQRLSLDEVMASKSSVSGVSMSHQHPPRHSCSCDPL. A compositionally biased stretch (basic and acidic residues) spans 312–321; sequence QRSERQRLSL. The segment covering 324-337 has biased composition (low complexity); the sequence is VMASKSSVSGVSMS.

The protein belongs to the IQD family. Binds to multiple calmodulin (CaM) in the presence of Ca(2+) and CaM-like proteins.

The protein localises to the nucleus. Its subcellular location is the nucleus envelope. It localises to the cytoplasm. The protein resides in the cytoskeleton. May be involved in cooperative interactions with calmodulins or calmodulin-like proteins. Recruits calmodulin proteins to microtubules, thus being a potential scaffold in cellular signaling and trafficking. May associate with nucleic acids and regulate gene expression at the transcriptional or post-transcriptional level. The sequence is that of Protein IQ-DOMAIN 27 from Arabidopsis thaliana (Mouse-ear cress).